The chain runs to 208 residues: Ubiquitin-conjugating enzyme E2 S (208 aa).

The 147-residue stretch at 14-160 folds into the UBC core domain; the sequence is QTIRQVMKEL…ARMMTEIHAQ (147 aa). Cysteine 98 (glycyl thioester intermediate) is an active-site residue. The interval 161–193 is disordered; that stretch reads PAKCGAGASDAKDDDGPSTKKHAGLDKKLQDKK. Residues 170–193 are compositionally biased toward basic and acidic residues; the sequence is DAKDDDGPSTKKHAGLDKKLQDKK.

This sequence belongs to the ubiquitin-conjugating enzyme family.

The enzyme catalyses S-ubiquitinyl-[E1 ubiquitin-activating enzyme]-L-cysteine + [E2 ubiquitin-conjugating enzyme]-L-cysteine = [E1 ubiquitin-activating enzyme]-L-cysteine + S-ubiquitinyl-[E2 ubiquitin-conjugating enzyme]-L-cysteine.. Its pathway is protein modification; protein ubiquitination. Functionally, catalyzes the covalent attachment of ubiquitin to other proteins. Acts as an essential factor of the anaphase promoting complex/cyclosome (APC/C), a cell cycle-regulated ubiquitin ligase that controls progression through mitosis. Acts by specifically elongating polyubiquitin chains initiated by the E2 enzyme vih/UbcH10 on APC/C substrates, enhancing the degradation of APC/C substrates by the proteasome and promoting mitotic exit. The chain is Ubiquitin-conjugating enzyme E2 S from Drosophila virilis (Fruit fly).